A 737-amino-acid chain; its full sequence is Glycogen [starch] synthase, muscle (737 aa).

Phosphoserine; by AMPK and PKA is present on S8. The residue at position 11 (S11) is a Phosphoserine. K39 serves as a coordination point for UDP. H205 and R211 together coordinate UDP-alpha-D-glucose. Alpha-D-glucose 6-phosphate-binding residues include H291, E292, Q294, H297, and K301. R331 serves as a coordination point for UDP. R331 is a binding site for UDP-alpha-D-glucose. S412 carries the post-translational modification Phosphoserine. H501 serves as a coordination point for alpha-D-glucose 6-phosphate. E510, W512, and G513 together coordinate UDP-alpha-D-glucose. Residue T515 coordinates UDP. Residues R582 and R586 each contribute to the alpha-D-glucose 6-phosphate site. Positions 634 to 737 (YRYPRPASVP…PTSSLGEERN (104 aa)) are disordered. 4 positions are modified to phosphoserine: S641, S645, S649, and S652. S653 is subject to Phosphoserine; by GSK3-alpha and GSK3-beta. At S657 the chain carries Phosphoserine; by CK2. Residues 658-681 (EDEEDPRNGPLEEDGERYDEDEEA) are compositionally biased toward acidic residues. Over residues 682-695 (AKDRRNIRAPEWPR) the composition is skewed to basic and acidic residues. S698 carries the phosphoserine modification. Over residues 698-714 (SCTSSTSGSKRNSVDTA) the composition is skewed to polar residues. T700 carries the phosphothreonine modification. The residue at position 710 (S710) is a Phosphoserine. Over residues 715 to 737 (TSSSLSTPSEPLSPTSSLGEERN) the composition is skewed to low complexity. Residue T721 is modified to Phosphothreonine. Phosphoserine is present on residues S727 and S731.

It belongs to the glycosyltransferase 3 family. As to quaternary structure, part of the GYS1-GYG1 complex, a heterooctamer composed of a tetramer of GYS1 and 2 dimers of GYG1, where each GYS1 protomer binds to one GYG1 subunit (via GYG1 C-terminus); the GYS1 tetramer may dissociate from GYG1 dimers to continue glycogen polymerization on its own. Phosphorylation at Ser-8 by AMPK inactivates the enzyme activity. Primed phosphorylation at Ser-657 (site 5) by CSNK2A1 and CSNK2A2 is required for inhibitory phosphorylation at Ser-641 (site 3a), Ser-645 (site 3b), Ser-649 (site 3c) and Ser-653 (site 4) by GSK3A an GSK3B. Phosphorylated at Ser-641 by DYRK2, leading to inactivation. Phosphorylated at Ser-641 by PASK, leading to inactivation; phosphorylation by PASK is inhibited by glycogen. Dephosphorylation at Ser-641 and Ser-645 by PP1 activates the enzyme. In terms of tissue distribution, expressed in skeletal muscle and most other cell types where glycogen is present.

The enzyme catalyses [(1-&gt;4)-alpha-D-glucosyl](n) + UDP-alpha-D-glucose = [(1-&gt;4)-alpha-D-glucosyl](n+1) + UDP + H(+). The protein operates within glycan biosynthesis; glycogen biosynthesis. Its activity is regulated as follows. Allosteric activation by glucose-6-phosphate. Phosphorylation reduces enzyme activity by constraining a tense conformation of the tetramer through inter-subunit interaction. Phosphorylation reduces the activity towards UDP-glucose. When in the non-phosphorylated state, glycogen synthase does not require glucose-6-phosphate as an allosteric activator; when phosphorylated it does. Its function is as follows. Glycogen synthase participates in the glycogen biosynthetic process along with glycogenin and glycogen branching enzyme. Extends the primer composed of a few glucose units formed by glycogenin by adding new glucose units to it. In this context, glycogen synthase transfers the glycosyl residue from UDP-Glc to the non-reducing end of alpha-1,4-glucan. The polypeptide is Glycogen [starch] synthase, muscle (Homo sapiens (Human)).